The primary structure comprises 292 residues: Elongation factor Ts (292 aa).

Residues 80-83 (TDFV) are involved in Mg(2+) ion dislocation from EF-Tu.

This sequence belongs to the EF-Ts family.

The protein resides in the cytoplasm. Functionally, associates with the EF-Tu.GDP complex and induces the exchange of GDP to GTP. It remains bound to the aminoacyl-tRNA.EF-Tu.GTP complex up to the GTP hydrolysis stage on the ribosome. This chain is Elongation factor Ts, found in Cupriavidus metallidurans (strain ATCC 43123 / DSM 2839 / NBRC 102507 / CH34) (Ralstonia metallidurans).